The primary structure comprises 264 residues: Probable amino-acid-binding protein YxeM (264 aa).

Residues 1–20 form the signal peptide; it reads MKMKKWTVLVVAALLAVLSA. C21 carries N-palmitoyl cysteine lipidation. Residue C21 is the site of S-diacylglycerol cysteine attachment.

It belongs to the bacterial solute-binding protein 3 family. As to quaternary structure, the complex is composed of two ATP-binding proteins (YxeO), two transmembrane proteins (YxeN) and a solute-binding protein (YxeM).

It localises to the cell membrane. The protein localises to the membrane raft. Functionally, probably part of the ABC transporter complex YxeMNO that could be involved in amino-acid import. May transport S-methylcysteine. In Bacillus subtilis (strain 168), this protein is Probable amino-acid-binding protein YxeM (yxeM).